A 705-amino-acid polypeptide reads, in one-letter code: Elongation factor G 2 (705 aa).

Residues Glu-8–Ala-288 enclose the tr-type G domain. GTP-binding positions include Ala-17–Thr-24, Asp-86–His-90, and Asn-140–Asp-143.

The protein belongs to the TRAFAC class translation factor GTPase superfamily. Classic translation factor GTPase family. EF-G/EF-2 subfamily.

The protein resides in the cytoplasm. In terms of biological role, catalyzes the GTP-dependent ribosomal translocation step during translation elongation. During this step, the ribosome changes from the pre-translocational (PRE) to the post-translocational (POST) state as the newly formed A-site-bound peptidyl-tRNA and P-site-bound deacylated tRNA move to the P and E sites, respectively. Catalyzes the coordinated movement of the two tRNA molecules, the mRNA and conformational changes in the ribosome. The chain is Elongation factor G 2 from Bordetella parapertussis (strain 12822 / ATCC BAA-587 / NCTC 13253).